The sequence spans 79 residues: Delta-hormotoxin-Cpt1a (79 aa).

Residues 1-20 (MKTQVLAVFVLCVLFCLAES) form the signal peptide. Residues 21-31 (RTTLNKRIDIA) constitute a propeptide that is removed on maturation. Intrachain disulfides connect Cys-36-Cys-75, Cys-38-Cys-66, and Cys-56-Cys-76.

The protein belongs to the sea anemone sodium channel inhibitory toxin family.

The protein localises to the secreted. Its subcellular location is the nematocyst. Functionally, in neuromuscular preparation of crustaceans, the toxin increased neurotransmitter release, causing repetitive firing of the axons. May affect sodium channels (Nav). The polypeptide is Delta-hormotoxin-Cpt1a (Calliactis parasitica (Sea anemone)).